The following is a 354-amino-acid chain: Selenide, water dikinase (354 aa).

Cys23 is a catalytic residue. ATP is bound by residues Lys26 and 54–56; that span reads TSD. Asp57 is a Mg(2+) binding site. ATP-binding positions include Asp74, Asp97, and 145–147; that span reads GHS. Position 97 (Asp97) interacts with Mg(2+). Asp233 contacts Mg(2+).

It belongs to the selenophosphate synthase 1 family. Class I subfamily. As to quaternary structure, homodimer. Mg(2+) serves as cofactor.

The enzyme catalyses hydrogenselenide + ATP + H2O = selenophosphate + AMP + phosphate + 2 H(+). Synthesizes selenophosphate from selenide and ATP. This is Selenide, water dikinase from Burkholderia pseudomallei (strain K96243).